Consider the following 1090-residue polypeptide: UPF0507 protein SCY_4172 (1090 aa).

Residues 289-436 (FSVNQLLTDF…FEDFNKNTGN (148 aa)) form the VPS9 domain.

Belongs to the UPF0507 family.

This Saccharomyces cerevisiae (strain YJM789) (Baker's yeast) protein is UPF0507 protein SCY_4172.